A 476-amino-acid chain; its full sequence is Protein transport protein Sec61 subunit alpha (476 aa).

The Cytoplasmic portion of the chain corresponds to 2 to 33 (GIKFLEVIKPFCAVLPEIQKPERKIQFREKVL). A helical membrane pass occupies residues 34–53 (WTAITLFIFLVCCQIPLFGI). The Lumenal portion of the chain corresponds to 54–76 (MSSDSADPFYWMRVILASNRGTL). Residues 77-96 (MELGISPIVTSGLIMQLLAG) traverse the membrane as a helical segment. Residues 97 to 117 (AKIIEVGDTPKDRALFNGAQK) lie on the Cytoplasmic side of the membrane. Residues 118-138 (LFGMIITIGQAIVYVMTGMYG) form a helical membrane-spanning segment. Over 139-144 (DPSEMG) the chain is Lumenal. A helical membrane pass occupies residues 145–165 (AGICLLIIIQLFVAGLIVLLL). Residues 166–172 (DELLQKG) lie on the Cytoplasmic side of the membrane. The helical transmembrane segment at 173-193 (YGLGSGISLFIATNICETIVW) threads the bilayer. Topologically, residues 194 to 240 (KAFSPTTVNTGRGTEFEGAIIALFHLLATRTDKVRALREAFYRQNLP) are lumenal. A helical membrane pass occupies residues 241–261 (NILNLIATVFVFAVVIYFQGF). The Cytoplasmic portion of the chain corresponds to 262-288 (RVDLPIKSARYRGQYNTYPIKLFYTSN). The chain crosses the membrane as a helical span at residues 289-309 (IPIILQSALVSNLYVISQMLS). The Lumenal portion of the chain corresponds to 310 to 354 (TRFSGNFLVNLLGTWSDATSGGPARAYPVAGLCYYLSPPESFGSV). A helical membrane pass occupies residues 355-375 (LDDPVHAAIYIVFMLGSCAFF). The Cytoplasmic segment spans residues 376–420 (SKTWIEVSGSSAKDVAKQLKEQQMVMRGHRETSMVHELNRYIPTA). The helical transmembrane segment at 421-441 (AAFGGLCIGGLSVMADFLGAI) threads the bilayer. Topologically, residues 442-445 (GSGT) are lumenal. A helical transmembrane segment spans residues 446–462 (GILLAVTIIYQYFEIFV). The Cytoplasmic portion of the chain corresponds to 463–476 (KEQSEMGSMGALLF).

Belongs to the SecY/SEC61-alpha family. As to quaternary structure, the SEC61 channel-forming translocon complex consists of channel-forming core components SEC61A1, SEC61B and SEC61G and different auxiliary components such as SEC62 and SEC63. The SEC61 channel associates with the multi-pass translocon (MPT) complex.

It localises to the endoplasmic reticulum membrane. In terms of biological role, component of SEC61 channel-forming translocon complex that mediates transport of signal peptide-containing precursor polypeptides across the endoplasmic reticulum (ER). Forms a ribosome receptor and a gated pore in the ER membrane, both functions required for cotranslational translocation of nascent polypeptides. May cooperate with auxiliary protein SEC62, SEC63 and HSPA5/BiP to enable post-translational transport of small presecretory proteins. The SEC61 channel is also involved in ER membrane insertion of transmembrane proteins: it mediates membrane insertion of the first few transmembrane segments of proteins, while insertion of subsequent transmembrane regions of multi-pass membrane proteins is mediated by the multi-pass translocon (MPT) complex. The sequence is that of Protein transport protein Sec61 subunit alpha (sec61a) from Dissostichus mawsoni (Antarctic cod).